A 461-amino-acid chain; its full sequence is Asparagine--tRNA ligase (461 aa).

Belongs to the class-II aminoacyl-tRNA synthetase family. In terms of assembly, homodimer.

It localises to the cytoplasm. The enzyme catalyses tRNA(Asn) + L-asparagine + ATP = L-asparaginyl-tRNA(Asn) + AMP + diphosphate + H(+). The sequence is that of Asparagine--tRNA ligase from Geobacter sulfurreducens (strain ATCC 51573 / DSM 12127 / PCA).